The following is a 220-amino-acid chain: Deoxyribose-phosphate aldolase (220 aa).

Aspartate 89 acts as the Proton donor/acceptor in catalysis. Lysine 151 serves as the catalytic Schiff-base intermediate with acetaldehyde. Catalysis depends on lysine 180, which acts as the Proton donor/acceptor.

This sequence belongs to the DeoC/FbaB aldolase family. DeoC type 1 subfamily.

It is found in the cytoplasm. It carries out the reaction 2-deoxy-D-ribose 5-phosphate = D-glyceraldehyde 3-phosphate + acetaldehyde. The protein operates within carbohydrate degradation; 2-deoxy-D-ribose 1-phosphate degradation; D-glyceraldehyde 3-phosphate and acetaldehyde from 2-deoxy-alpha-D-ribose 1-phosphate: step 2/2. Functionally, catalyzes a reversible aldol reaction between acetaldehyde and D-glyceraldehyde 3-phosphate to generate 2-deoxy-D-ribose 5-phosphate. This chain is Deoxyribose-phosphate aldolase, found in Lactococcus lactis subsp. cremoris (strain SK11).